A 95-amino-acid chain; its full sequence is Large ribosomal subunit protein uL23 (95 aa).

This sequence belongs to the universal ribosomal protein uL23 family. In terms of assembly, part of the 50S ribosomal subunit. Contacts protein L29, and trigger factor when it is bound to the ribosome.

One of the early assembly proteins it binds 23S rRNA. One of the proteins that surrounds the polypeptide exit tunnel on the outside of the ribosome. Forms the main docking site for trigger factor binding to the ribosome. This Desulfitobacterium hafniense (strain DSM 10664 / DCB-2) protein is Large ribosomal subunit protein uL23.